The chain runs to 221 residues: 3-phospho-D-glycerate guanylyltransferase (221 aa).

This sequence belongs to the CofC family.

The catalysed reaction is (2R)-3-phosphoglycerate + GTP + H(+) = 3-[(R)-glyceryl]-diphospho-5'-guanosine + diphosphate. It catalyses the reaction (2S)-2-phospholactate + GTP + H(+) = (2S)-lactyl-2-diphospho-5'-guanosine + diphosphate. It participates in cofactor biosynthesis; coenzyme F420 biosynthesis. Guanylyltransferase that catalyzes the activation of (2R)-3-phosphoglycerate (3PG) as 3-[(R)-glyceryl]-diphospho-5'-guanosine, via the condensation of 3PG with GTP. It is involved in the biosynthesis of a derivative of the hydride carrier cofactor coenzyme F420, 3PG-F420. Can also use (2S)-2-phospholactate (2-PL), with lower turnover, and has weak activity with phosphoenolpyruvate (PEP). The protein is 3-phospho-D-glycerate guanylyltransferase of Mycetohabitans rhizoxinica (strain DSM 19002 / CIP 109453 / HKI 454) (Paraburkholderia rhizoxinica).